Here is a 959-residue protein sequence, read N- to C-terminus: Isoleucine--tRNA ligase (959 aa).

The 'HIGH' region motif lies at 66–76; that stretch reads PYANGDLHIGH. Residue E592 participates in L-isoleucyl-5'-AMP binding. Residues 633 to 637 carry the 'KMSKS' region motif; sequence KMSKS. K636 is a binding site for ATP. Positions 922, 925, 942, and 945 each coordinate Zn(2+).

The protein belongs to the class-I aminoacyl-tRNA synthetase family. IleS type 1 subfamily. As to quaternary structure, monomer. Zn(2+) serves as cofactor.

Its subcellular location is the cytoplasm. It catalyses the reaction tRNA(Ile) + L-isoleucine + ATP = L-isoleucyl-tRNA(Ile) + AMP + diphosphate. Its function is as follows. Catalyzes the attachment of isoleucine to tRNA(Ile). As IleRS can inadvertently accommodate and process structurally similar amino acids such as valine, to avoid such errors it has two additional distinct tRNA(Ile)-dependent editing activities. One activity is designated as 'pretransfer' editing and involves the hydrolysis of activated Val-AMP. The other activity is designated 'posttransfer' editing and involves deacylation of mischarged Val-tRNA(Ile). The protein is Isoleucine--tRNA ligase of Ralstonia pickettii (strain 12J).